The sequence spans 109 residues: UPF0060 membrane protein RHA1_ro06609 (109 aa).

The next 4 membrane-spanning stretches (helical) occupy residues 7–27, 33–53, 62–82, and 88–108; these read VALF…VWQG, GWIW…VATL, ILAA…MVAD, and RWDV…MYAP.

The protein belongs to the UPF0060 family.

The protein resides in the cell membrane. The polypeptide is UPF0060 membrane protein RHA1_ro06609 (Rhodococcus jostii (strain RHA1)).